The following is a 181-amino-acid chain: uncharacterized protein (181 aa).

Belongs to the M.jannaschii MJ0150/MJ0739/MJ0745/MJ1460/MJ1642 family.

This is an uncharacterized protein from Methanocaldococcus jannaschii (strain ATCC 43067 / DSM 2661 / JAL-1 / JCM 10045 / NBRC 100440) (Methanococcus jannaschii).